Consider the following 272-residue polypeptide: 3-methyl-2-oxobutanoate hydroxymethyltransferase (272 aa).

Mg(2+) contacts are provided by Asp43 and Asp82. Residues Asp43 to Ser44, Asp82, and Lys112 contribute to the 3-methyl-2-oxobutanoate site. Position 114 (Glu114) interacts with Mg(2+). Glu179 serves as the catalytic Proton acceptor.

Belongs to the PanB family. In terms of assembly, homodecamer; pentamer of dimers. Mg(2+) is required as a cofactor.

The protein resides in the cytoplasm. The catalysed reaction is 3-methyl-2-oxobutanoate + (6R)-5,10-methylene-5,6,7,8-tetrahydrofolate + H2O = 2-dehydropantoate + (6S)-5,6,7,8-tetrahydrofolate. It functions in the pathway cofactor biosynthesis; (R)-pantothenate biosynthesis; (R)-pantoate from 3-methyl-2-oxobutanoate: step 1/2. In terms of biological role, catalyzes the reversible reaction in which hydroxymethyl group from 5,10-methylenetetrahydrofolate is transferred onto alpha-ketoisovalerate to form ketopantoate. This is 3-methyl-2-oxobutanoate hydroxymethyltransferase from Staphylococcus aureus (strain Newman).